The primary structure comprises 229 residues: Translation initiation factor IF-3 (229 aa).

Disordered regions lie at residues 1–21 (MAIQQRDSRGGTNRDARTNRR) and 184–229 (QAQR…AGPR). A compositionally biased stretch (low complexity) spans 192 to 203 (AAAQAAPAAAPQ). Pro residues predominate over residues 204–221 (PGAPAAPPAAPAPAPAPE).

It belongs to the IF-3 family. As to quaternary structure, monomer.

The protein localises to the cytoplasm. IF-3 binds to the 30S ribosomal subunit and shifts the equilibrium between 70S ribosomes and their 50S and 30S subunits in favor of the free subunits, thus enhancing the availability of 30S subunits on which protein synthesis initiation begins. This Anaeromyxobacter sp. (strain Fw109-5) protein is Translation initiation factor IF-3.